Reading from the N-terminus, the 89-residue chain is Small ribosomal subunit protein uS15 (89 aa).

It belongs to the universal ribosomal protein uS15 family. As to quaternary structure, part of the 30S ribosomal subunit. Forms a bridge to the 50S subunit in the 70S ribosome, contacting the 23S rRNA.

One of the primary rRNA binding proteins, it binds directly to 16S rRNA where it helps nucleate assembly of the platform of the 30S subunit by binding and bridging several RNA helices of the 16S rRNA. In terms of biological role, forms an intersubunit bridge (bridge B4) with the 23S rRNA of the 50S subunit in the ribosome. The protein is Small ribosomal subunit protein uS15 of Roseiflexus sp. (strain RS-1).